The chain runs to 114 residues: Large ribosomal subunit protein uL18 (114 aa).

Belongs to the universal ribosomal protein uL18 family. Part of the 50S ribosomal subunit; part of the 5S rRNA/L5/L18/L25 subcomplex. Contacts the 5S and 23S rRNAs.

In terms of biological role, this is one of the proteins that bind and probably mediate the attachment of the 5S RNA into the large ribosomal subunit, where it forms part of the central protuberance. The chain is Large ribosomal subunit protein uL18 from Aster yellows phytoplasma.